The chain runs to 435 residues: Trigger factor (435 aa).

Residues 163–248 form the PPIase FKBP-type domain; the sequence is GDFVTFDFKG…IKEIKVKELP (86 aa).

The protein belongs to the FKBP-type PPIase family. Tig subfamily.

Its subcellular location is the cytoplasm. The catalysed reaction is [protein]-peptidylproline (omega=180) = [protein]-peptidylproline (omega=0). Involved in protein export. Acts as a chaperone by maintaining the newly synthesized protein in an open conformation. Functions as a peptidyl-prolyl cis-trans isomerase. In Citrifermentans bemidjiense (strain ATCC BAA-1014 / DSM 16622 / JCM 12645 / Bem) (Geobacter bemidjiensis), this protein is Trigger factor.